Here is a 60-residue protein sequence, read N- to C-terminus: Potassium channel toxin alpha-KTx 12.5 (60 aa).

Positions 1–22 (MNKLPILIFMLLVCSMFISSDC) are cleaved as a signal peptide. 3 disulfide bridges follow: C30–C51, C36–C56, and C40–C58.

Belongs to the short scorpion toxin superfamily. Potassium channel inhibitor family. Alpha-KTx 12 subfamily. As to expression, expressed by the venom gland.

It is found in the secreted. This recombinant toxin inhibits the mammalian voltage-gated potassium channels Kv1.3/KCNA3 (IC(50)=28 nM). Kv1.1/KCNA1 and Kv1.2/KCNA2 potassium channels are also weakly inhibited (IC(50)=1.73 uM and IC(50)=12.63 uM, respectively). This chain is Potassium channel toxin alpha-KTx 12.5, found in Lychas mucronatus (Chinese swimming scorpion).